A 348-amino-acid chain; its full sequence is D-alanine--D-alanine ligase (348 aa).

In terms of domain architecture, ATP-grasp spans 136–341 (KYLLQTVGIP…YSDLIEELIQ (206 aa)). ATP is bound at residue 169–224 (EGSLIYPVFVKPANMGSSVGISKVENREELQEALEEAFRYDARAIVEQGIEAREIE). 3 residues coordinate Mg(2+): Asp-295, Glu-308, and Asn-310.

The protein belongs to the D-alanine--D-alanine ligase family. Mg(2+) is required as a cofactor. It depends on Mn(2+) as a cofactor.

It localises to the cytoplasm. It catalyses the reaction 2 D-alanine + ATP = D-alanyl-D-alanine + ADP + phosphate + H(+). Its pathway is cell wall biogenesis; peptidoglycan biosynthesis. Cell wall formation. The polypeptide is D-alanine--D-alanine ligase (ddl) (Enterococcus faecalis (strain ATCC 700802 / V583)).